The following is an 838-amino-acid chain: Probable beta-glucosidase I (838 aa).

Asn-57 and Asn-197 each carry an N-linked (GlcNAc...) asparagine glycan. The active site involves Asp-225. Residues Glu-395 to Ala-555 enclose the PA14 domain. A glycan (N-linked (GlcNAc...) asparagine) is linked at Asn-493.

This sequence belongs to the glycosyl hydrolase 3 family.

Its subcellular location is the secreted. The enzyme catalyses Hydrolysis of terminal, non-reducing beta-D-glucosyl residues with release of beta-D-glucose.. It participates in glycan metabolism; cellulose degradation. Functionally, beta-glucosidases are one of a number of cellulolytic enzymes involved in the degradation of cellulosic biomass. Catalyzes the last step releasing glucose from the inhibitory cellobiose. In Aspergillus clavatus (strain ATCC 1007 / CBS 513.65 / DSM 816 / NCTC 3887 / NRRL 1 / QM 1276 / 107), this protein is Probable beta-glucosidase I (bglI).